Here is a 445-residue protein sequence, read N- to C-terminus: Tol-Pal system protein TolB (445 aa).

Positions 1-26 are cleaved as a signal peptide; it reads MLNRRNFIRTTSALAASTALPGYAFG.

The protein belongs to the TolB family. As to quaternary structure, the Tol-Pal system is composed of five core proteins: the inner membrane proteins TolA, TolQ and TolR, the periplasmic protein TolB and the outer membrane protein Pal. They form a network linking the inner and outer membranes and the peptidoglycan layer.

It localises to the periplasm. In terms of biological role, part of the Tol-Pal system, which plays a role in outer membrane invagination during cell division and is important for maintaining outer membrane integrity. The polypeptide is Tol-Pal system protein TolB (Jannaschia sp. (strain CCS1)).